Here is a 227-residue protein sequence, read N- to C-terminus: UPF0173 metal-dependent hydrolase BCE33L4354 (227 aa).

The protein belongs to the UPF0173 family.

This Bacillus cereus (strain ZK / E33L) protein is UPF0173 metal-dependent hydrolase BCE33L4354.